A 100-amino-acid chain; its full sequence is Gas vesicle protein J (100 aa).

This sequence belongs to the gas vesicle GvpA family. In terms of assembly, interacts with GvpA.

Its subcellular location is the gas vesicle. In terms of biological role, a minor component of the gas vesicle, might be involved in nucleating gas vesicle formation. This protein could be important for the shape determination of the gas vesicle. Gas vesicles (GV) are hollow, gas filled proteinaceous nanostructures. During planktonic growth they allow positioning of the organism at a favorable depth for light or nutrient acquisition. Functionally, when a minimal gvp locus (gvpA2-gvpR-gvpN-gvpF-gvpG-gvpL-gvpS-gvpK-gvpJ-gvpT-gvpU, called pNL29) is expressed in E.coli gas vesicles are made. The polypeptide is Gas vesicle protein J (Priestia megaterium (Bacillus megaterium)).